A 462-amino-acid chain; its full sequence is UDP-N-acetylmuramoylalanine--D-glutamate ligase (462 aa).

117–123 (GTNGKTT) is an ATP binding site.

This sequence belongs to the MurCDEF family.

The protein localises to the cytoplasm. It carries out the reaction UDP-N-acetyl-alpha-D-muramoyl-L-alanine + D-glutamate + ATP = UDP-N-acetyl-alpha-D-muramoyl-L-alanyl-D-glutamate + ADP + phosphate + H(+). It functions in the pathway cell wall biogenesis; peptidoglycan biosynthesis. In terms of biological role, cell wall formation. Catalyzes the addition of glutamate to the nucleotide precursor UDP-N-acetylmuramoyl-L-alanine (UMA). This chain is UDP-N-acetylmuramoylalanine--D-glutamate ligase, found in Synechococcus sp. (strain CC9902).